The chain runs to 331 residues: Geranylgeranyl pyrophosphate synthase dpmaD (331 aa).

3 residues coordinate isopentenyl diphosphate: Lys53, Arg56, and His85. Mg(2+)-binding residues include Asp92 and Asp96. Arg101 contacts dimethylallyl diphosphate. Arg102 contributes to the isopentenyl diphosphate binding site. Positions 179, 180, and 213 each coordinate dimethylallyl diphosphate. Asp216 is a binding site for Mg(2+). Dimethylallyl diphosphate-binding residues include Asn220, Lys230, and Lys240.

It belongs to the FPP/GGPP synthase family. It depends on Mg(2+) as a cofactor.

It catalyses the reaction isopentenyl diphosphate + dimethylallyl diphosphate = (2E)-geranyl diphosphate + diphosphate. It carries out the reaction isopentenyl diphosphate + (2E)-geranyl diphosphate = (2E,6E)-farnesyl diphosphate + diphosphate. The enzyme catalyses isopentenyl diphosphate + (2E,6E)-farnesyl diphosphate = (2E,6E,10E)-geranylgeranyl diphosphate + diphosphate. The protein operates within secondary metabolite biosynthesis; terpenoid biosynthesis. Its function is as follows. Geranylgeranyl pyrophosphate synthase; part of the gene cluster that mediates the biosynthesis of the diterpenoid pyrones subglutinols A and B. The first step of the pathway is the synthesis of the alpha-pyrone moiety by the polyketide synthase dpmaA via condensation of one acetyl-CoA starter unit with 3 malonyl-CoA units and 2 methylations. The alpha-pyrone is then combined with geranylgeranyl pyrophosphate (GGPP) formed by the GGPP synthase dpmaD through the action of the prenyltransferase dpmaC to yield a linear alpha-pyrone diterpenoid. Subsequent steps in the diterpenoid pyrone biosynthetic pathway involve the decalin core formation, which is initiated by the epoxidation of the C10-C11 olefin by the FAD-dependent oxidoreductase dpmaE, and is followed by a cyclization cascade catalyzed by the terpene cyclase dpmaB. The dehydrogenase dpmaF is then involved in tetrahydrofuran (THF) ring formation at the C5 unit to complete the formation of subglutinols A and B. This Metarhizium anisopliae (Entomophthora anisopliae) protein is Geranylgeranyl pyrophosphate synthase dpmaD.